Reading from the N-terminus, the 388-residue chain is Cdc42 effector protein 1 (388 aa).

The segment at 1–28 (MPGPQGGTGAPSMSLGKLSPVGWVPSSH) is disordered. Ser19 and Ser27 each carry phosphoserine. The residue at position 34 (Thr34) is a Phosphothreonine. The CRIB domain occupies 38 to 52 (ISPPLGDFRHTMHVG). Ser39 carries the phosphoserine modification. An Omega-N-methylarginine modification is found at Arg53. Phosphoserine is present on residues Ser65, Ser77, Ser101, Ser113, Ser121, and Ser139. The tract at residues 165 to 206 (RLPRVEKHSSRDRDHDRDPDHSQDREQSSSPSEPNPNPELRR) is disordered. Basic and acidic residues predominate over residues 167–191 (PRVEKHSSRDRDHDRDPDHSQDREQ). 4 positions are modified to phosphoserine: Ser193, Ser207, Ser209, and Ser212. 2 tandem repeats follow at residues 237-243 (PAANPPA) and 250-256 (PTAKPPA). The tract at residues 237 to 257 (PAANPPAPAANPAPTAKPPAD) is disordered. The 2 X 7 AA tandem repeats of [PT]-[AT]-A-[ENT]-[PT]-[PTS]-[AG] stretch occupies residues 237-270 (PAANPPAPAANPAPTAKPPADAVTTLDTVTSLPA). Positions 239 to 253 (ANPPAPAANPAPTAK) are enriched in pro residues. Ser298, Ser318, Ser347, and Ser350 each carry phosphoserine.

It belongs to the BORG/CEP family. Interacts with RHOQ and CDC42, in a GTP-dependent manner.

The protein resides in the endomembrane system. Its subcellular location is the cytoplasm. It localises to the cytoskeleton. Its function is as follows. Probably involved in the organization of the actin cytoskeleton. Induced membrane extensions in fibroblasts. The protein is Cdc42 effector protein 1 of Rattus norvegicus (Rat).